Here is a 364-residue protein sequence, read N- to C-terminus: Protein Wnt-6 (364 aa).

The first 23 residues, 1 to 23, serve as a signal peptide directing secretion; sequence MLPPVPSRLGLLLLLLCPAHVDG. Disulfide bonds link Cys75/Cys86, Cys123/Cys131, Cys133/Cys171, Cys221/Cys235, Cys223/Cys230, Cys293/Cys324, Cys309/Cys319, Cys323/Cys363, Cys339/Cys354, Cys341/Cys351, and Cys346/Cys347. N-linked (GlcNAc...) asparagine glycosylation is present at Asn85. The interval 140 to 162 is disordered; the sequence is APPRPSGLLGTPGPPGPTGSPDA. Ser227 carries the O-palmitoleoyl serine; by PORCN lipid modification. The N-linked (GlcNAc...) asparagine glycan is linked to Asn310.

The protein belongs to the Wnt family. In terms of assembly, interacts with PORCN. Palmitoleoylation is required for efficient binding to frizzled receptors. Depalmitoleoylation leads to Wnt signaling pathway inhibition. As to expression, detected in ileum, colon and stomach (at protein level).

The protein resides in the secreted. It is found in the extracellular space. It localises to the extracellular matrix. Functionally, ligand for members of the frizzled family of seven transmembrane receptors. Probable developmental protein. May be a signaling molecule which affects the development of discrete regions of tissues. Is likely to signal over only few cell diameters. This Mus musculus (Mouse) protein is Protein Wnt-6 (Wnt6).